We begin with the raw amino-acid sequence, 125 residues long: Holo-[acyl-carrier-protein] synthase (125 aa).

2 residues coordinate Mg(2+): Asp8 and Glu57.

Belongs to the P-Pant transferase superfamily. AcpS family. Requires Mg(2+) as cofactor.

It localises to the cytoplasm. It carries out the reaction apo-[ACP] + CoA = holo-[ACP] + adenosine 3',5'-bisphosphate + H(+). Transfers the 4'-phosphopantetheine moiety from coenzyme A to a Ser of acyl-carrier-protein. In Blochmanniella pennsylvanica (strain BPEN), this protein is Holo-[acyl-carrier-protein] synthase.